We begin with the raw amino-acid sequence, 962 residues long: Protein kinase ORF73 (962 aa).

Disordered stretches follow at residues 1–28 and 62–152; these read MADR…NDRP and STPA…RATT. The segment covering 81–90 has biased composition (acidic residues); sequence DSDDDDEEDN. The segment covering 143-152 has biased composition (polar residues); sequence YDTTGRRATT. In terms of domain architecture, Protein kinase spans 301-595; sequence LRAAPVLGKG…ASDLLKSPRY (295 aa). ATP contacts are provided by residues 307–315 and lysine 324; that span reads LGKGYFGTV. The Proton acceptor role is filled by aspartate 434.

It belongs to the protein kinase superfamily. Ser/Thr protein kinase family.

The catalysed reaction is L-seryl-[protein] + ATP = O-phospho-L-seryl-[protein] + ADP + H(+). The enzyme catalyses L-threonyl-[protein] + ATP = O-phospho-L-threonyl-[protein] + ADP + H(+). This is Protein kinase ORF73 (ORF73) from Ictaluridae (bullhead catfishes).